We begin with the raw amino-acid sequence, 361 residues long: Phosphoserine aminotransferase (361 aa).

Serine 9 and arginine 42 together coordinate L-glutamate. Pyridoxal 5'-phosphate contacts are provided by residues glycine 76–arginine 77, tryptophan 102, threonine 153, aspartate 173, and glutamine 196. Residue lysine 197 is modified to N6-(pyridoxal phosphate)lysine. Asparagine 238–threonine 239 is a pyridoxal 5'-phosphate binding site.

It belongs to the class-V pyridoxal-phosphate-dependent aminotransferase family. SerC subfamily. In terms of assembly, homodimer. Pyridoxal 5'-phosphate is required as a cofactor.

The protein localises to the cytoplasm. It carries out the reaction O-phospho-L-serine + 2-oxoglutarate = 3-phosphooxypyruvate + L-glutamate. The enzyme catalyses 4-(phosphooxy)-L-threonine + 2-oxoglutarate = (R)-3-hydroxy-2-oxo-4-phosphooxybutanoate + L-glutamate. The protein operates within amino-acid biosynthesis; L-serine biosynthesis; L-serine from 3-phospho-D-glycerate: step 2/3. Its pathway is cofactor biosynthesis; pyridoxine 5'-phosphate biosynthesis; pyridoxine 5'-phosphate from D-erythrose 4-phosphate: step 3/5. Its function is as follows. Catalyzes the reversible conversion of 3-phosphohydroxypyruvate to phosphoserine and of 3-hydroxy-2-oxo-4-phosphonooxybutanoate to phosphohydroxythreonine. The polypeptide is Phosphoserine aminotransferase (Cronobacter sakazakii (strain ATCC BAA-894) (Enterobacter sakazakii)).